The primary structure comprises 85 residues: Granaticin polyketide synthase acyl carrier protein (85 aa).

In terms of domain architecture, Carrier spans 3-81; it reads RLTLDGLRTI…VLLDLVNGAQ (79 aa). An O-(pantetheine 4'-phosphoryl)serine modification is found at serine 41.

4'-phosphopantetheine is transferred from CoA to a specific serine of the apo-ACP-like protein.

It functions in the pathway antibiotic biosynthesis; granaticin biosynthesis. Its function is as follows. Acyl carrier protein. The chain is Granaticin polyketide synthase acyl carrier protein from Streptomyces violaceoruber.